Reading from the N-terminus, the 1181-residue chain is Clustered mitochondria protein homolog (1181 aa).

Residues 165 to 195 (AKAEALAKNEEVSEDEESEPEDDTPMKQSTQ) are disordered. Positions 176-187 (VSEDEESEPEDD) are enriched in acidic residues. The 244-residue stretch at 379–622 (DMARNQELLS…RLAPVDIAFL (244 aa)) folds into the Clu domain. Residues 1130 to 1181 (GRLARQAPKPTATHQKEAPKKASKKTKGKGKGKDDKGEKLVAELKKKKAGKR) form a disordered region. The span at 1150–1159 (KASKKTKGKG) shows a compositional bias: basic residues. A compositionally biased stretch (basic and acidic residues) spans 1160-1173 (KGKDDKGEKLVAEL).

The protein belongs to the CLU family. May associate with the eukaryotic translation initiation factor 3 (eIF-3) complex.

It localises to the cytoplasm. Functionally, mRNA-binding protein involved in proper cytoplasmic distribution of mitochondria. The polypeptide is Clustered mitochondria protein homolog (Yarrowia lipolytica (strain CLIB 122 / E 150) (Yeast)).